Reading from the N-terminus, the 842-residue chain is Gamma-aminobutyric acid type B receptor subunit 2 (842 aa).

Residues 1–17 (MSRWLSLLLFAVQAVGG) form the signal peptide. The Extracellular segment spans residues 18–438 (YEAGEELSCK…TERRREHISS (421 aa)). N-linked (GlcNAc...) asparagine glycosylation is found at Asn274, Asn279, Asn327, and Asn366. Residues 439–459 (ILFLAMSLLALIGIFLALIFL) form a helical membrane-spanning segment. Residues 460–477 (LINFRYRNHRFIKMSSPN) lie on the Cytoplasmic side of the membrane. Residues 478–498 (LNNIIIAGSICTFASVIMLGL) traverse the membrane as a helical segment. At 499–506 (DTRIVSPD) the chain is on the extracellular side. Residues 507 to 527 (VFVWLCYTKTWTLCIGFTLSF) form a helical membrane-spanning segment. Residues 528–556 (GAMFSKTWRVHSIFTNIRMDRKAIKDSKL) lie on the Cytoplasmic side of the membrane. The chain crosses the membrane as a helical span at residues 557 to 577 (FIILGILLFIDICVLVTWAFV). Residues 578–610 (SPFSYTVTELPHIPEDNIVIIPEVEKCNSSHSG) lie on the Extracellular side of the membrane. A glycan (N-linked (GlcNAc...) asparagine) is linked at Asn605. The chain crosses the membrane as a helical span at residues 611–631 (VFQAVLYAVKGVLMILGCFLA). Topologically, residues 632–647 (WETRHVNVPALNDSKY) are cytoplasmic. The chain crosses the membrane as a helical span at residues 648–668 (IGTSVYCCVVMSVLGLSTSVI). At 669–676 (LQERVNEM) the chain is on the extracellular side. Residues 677-697 (FSLASFFVIFSTTLTLCLVFV) form a helical membrane-spanning segment. Residues 698 to 842 (PKVIELARNP…VDPDEPSTKL (145 aa)) are Cytoplasmic-facing. A compositionally biased stretch (polar residues) spans 725-740 (AKTSQPMSPQPRSDSS). 2 disordered regions span residues 725–744 (AKTSQPMSPQPRSDSSGDLI) and 791–842 (SPSS…STKL).

It belongs to the G-protein coupled receptor 3 family. May form a heterodimer with gbb-1. As to expression, expressed in cholinergic motor neurons.

The protein localises to the cell membrane. Its function is as follows. Component of a heterodimeric G-protein coupled receptor for GABA, formed by gbb-1 and gbb-2. Within the heterodimeric GABA receptor, only gbb-1 seems to bind agonists, while gbb-2 mediates coupling to G proteins. Ligand binding causes a conformation change that triggers signaling via guanine nucleotide-binding proteins (G proteins) and modulates the activity of down-stream effectors, such as adenylate cyclase. Signaling inhibits adenylate cyclase, stimulates phospholipase A2, activates potassium channels, inactivates voltage-dependent calcium-channels and modulates inositol phospholipid hydrolysis. Plays a critical role in the fine-tuning of inhibitory synaptic transmission. Pre-synaptic GABA receptor inhibits neurotransmitter release by down-regulating high-voltage activated calcium channels, whereas postsynaptic GABA receptor decreases neuronal excitability by activating a prominent inwardly rectifying potassium (Kir) conductance that underlies the late inhibitory postsynaptic potentials. Along with gbb-1, may couple to the G(o)-alpha G-protein goa-1 to negatively regulate cholinergic receptor activity in the presence of high levels of acetylcholine in ventral cord motor neurons. As acetylcholine depolarizes body wall muscles, modulation of acetylcholine levels most likely results in the control of locomotory behavior. Regulates locomotory behavior in response to GABA release by GABAergic motor neurons. This is Gamma-aminobutyric acid type B receptor subunit 2 from Caenorhabditis elegans.